A 150-amino-acid chain; its full sequence is HTH-type transcriptional regulator LrpA (150 aa).

Residues 5-66 (LDDIDRILVR…RINPEAVGHL (62 aa)) form the HTH asnC-type domain. The H-T-H motif DNA-binding region spans 24–43 (LSELATRAGLSVSAVQSRVR). Residues valine 100, glycine 102, and glutamate 104 each coordinate L-phenylalanine.

In terms of assembly, homohexadecamer in the absence of any added ligand. Homooctamer. Tetramer of dimers. In the presence of phenylalanine, the hexadecamer dissociates into an octamer, which further dissociates partially into lower-order oligomers.

With respect to regulation, the DNA-binding activity of LrpA is modulated by interaction of LrpA with various effector molecules, including amino acids and vitamins. The DNA binding affinity is decreased by several amino acids, including phenylalanine, tyrosine, tryptophan, histidine, leucine and aspartate. Preferentially binds to aromatic amino acids. Besides amino acids, the binding affinity is also reduced by vitamins, including B1, B3, B6, VC, B7, B9, B12, VA and VK3. Transcriptional regulator that probably plays an important role in M.tuberculosis persistence. Regulates the expression of several genes, including lat, rsmG, whiB2, lsr2 and Rv2011c. Acts by binding directly to the promoter region of the target genes. The sequence is that of HTH-type transcriptional regulator LrpA from Mycobacterium tuberculosis (strain ATCC 25618 / H37Rv).